The sequence spans 159 residues: 2-C-methyl-D-erythritol 2,4-cyclodiphosphate synthase (159 aa).

A divalent metal cation-binding residues include Asp8 and His10. 4-CDP-2-C-methyl-D-erythritol 2-phosphate is bound by residues 8 to 10 and 34 to 35; these read DVH and HS. Residue His42 coordinates a divalent metal cation. Residues 56-58, 61-65, 100-106, 132-135, Phe139, and Arg142 contribute to the 4-CDP-2-C-methyl-D-erythritol 2-phosphate site; these read DIG, FPDTD, AQAPKML, and TTTE.

It belongs to the IspF family. Homotrimer. It depends on a divalent metal cation as a cofactor.

It carries out the reaction 4-CDP-2-C-methyl-D-erythritol 2-phosphate = 2-C-methyl-D-erythritol 2,4-cyclic diphosphate + CMP. Its pathway is isoprenoid biosynthesis; isopentenyl diphosphate biosynthesis via DXP pathway; isopentenyl diphosphate from 1-deoxy-D-xylulose 5-phosphate: step 4/6. In terms of biological role, involved in the biosynthesis of isopentenyl diphosphate (IPP) and dimethylallyl diphosphate (DMAPP), two major building blocks of isoprenoid compounds. Catalyzes the conversion of 4-diphosphocytidyl-2-C-methyl-D-erythritol 2-phosphate (CDP-ME2P) to 2-C-methyl-D-erythritol 2,4-cyclodiphosphate (ME-CPP) with a corresponding release of cytidine 5-monophosphate (CMP). The sequence is that of 2-C-methyl-D-erythritol 2,4-cyclodiphosphate synthase from Salmonella typhimurium (strain LT2 / SGSC1412 / ATCC 700720).